Reading from the N-terminus, the 205-residue chain is N-(5'-phosphoribosyl)anthranilate isomerase (205 aa).

This sequence belongs to the TrpF family.

The catalysed reaction is N-(5-phospho-beta-D-ribosyl)anthranilate = 1-(2-carboxyphenylamino)-1-deoxy-D-ribulose 5-phosphate. It participates in amino-acid biosynthesis; L-tryptophan biosynthesis; L-tryptophan from chorismate: step 3/5. This chain is N-(5'-phosphoribosyl)anthranilate isomerase, found in Clostridium acetobutylicum (strain ATCC 824 / DSM 792 / JCM 1419 / IAM 19013 / LMG 5710 / NBRC 13948 / NRRL B-527 / VKM B-1787 / 2291 / W).